The primary structure comprises 216 residues: Peptide methionine sulfoxide reductase MsrA (216 aa).

C54 is a catalytic residue.

The protein belongs to the MsrA Met sulfoxide reductase family.

It catalyses the reaction L-methionyl-[protein] + [thioredoxin]-disulfide + H2O = L-methionyl-(S)-S-oxide-[protein] + [thioredoxin]-dithiol. It carries out the reaction [thioredoxin]-disulfide + L-methionine + H2O = L-methionine (S)-S-oxide + [thioredoxin]-dithiol. Functionally, has an important function as a repair enzyme for proteins that have been inactivated by oxidation. Catalyzes the reversible oxidation-reduction of methionine sulfoxide in proteins to methionine. The protein is Peptide methionine sulfoxide reductase MsrA of Xylella fastidiosa (strain M12).